The sequence spans 301 residues: GTPase Era (301 aa).

Residues 7–173 enclose the Era-type G domain; it reads KSGFVALLGR…LNTINKYLPE (167 aa). The tract at residues 15-22 is G1; the sequence is GRPNVGKS. 15–22 is a binding site for GTP; it reads GRPNVGKS. The segment at 41-45 is G2; the sequence is QTTRN. The interval 62–65 is G3; it reads DTPG. Residues 62–66 and 123–126 contribute to the GTP site; these read DTPGI and NKVD. Residues 123–126 are G4; sequence NKVD. The tract at residues 152–154 is G5; sequence ISA. In terms of domain architecture, KH type-2 spans 204 to 281; that stretch reads TSQEVPHATA…NLRLWVKVQH (78 aa).

The protein belongs to the TRAFAC class TrmE-Era-EngA-EngB-Septin-like GTPase superfamily. Era GTPase family. Monomer.

Its subcellular location is the cytoplasm. The protein resides in the cell membrane. In terms of biological role, an essential GTPase that binds both GDP and GTP, with rapid nucleotide exchange. Plays a role in 16S rRNA processing and 30S ribosomal subunit biogenesis and possibly also in cell cycle regulation and energy metabolism. This is GTPase Era from Lactobacillus helveticus (strain DPC 4571).